Consider the following 489-residue polypeptide: Rhamnulokinase (489 aa).

13–17 (ASSGR) is a binding site for ATP. A disulfide bond links Cys68 and Cys222. Residues Gly83 and 236-238 (HDT) each bind substrate. Asp237 serves as the catalytic Proton acceptor. Thr259 is an ATP binding site. Asn296 lines the substrate pocket. Gln304 contributes to the ATP binding site. Cys353 and Cys370 are disulfide-bonded. Gly402 contacts ATP. Cys413 and Cys417 are joined by a disulfide.

This sequence belongs to the rhamnulokinase family. In terms of assembly, monomer. The cofactor is Mg(2+).

It catalyses the reaction L-rhamnulose + ATP = L-rhamnulose 1-phosphate + ADP + H(+). The protein operates within carbohydrate degradation; L-rhamnose degradation; glycerone phosphate from L-rhamnose: step 2/3. Involved in the catabolism of L-rhamnose (6-deoxy-L-mannose). Catalyzes the transfer of the gamma-phosphate group from ATP to the 1-hydroxyl group of L-rhamnulose to yield L-rhamnulose 1-phosphate. This Escherichia coli O127:H6 (strain E2348/69 / EPEC) protein is Rhamnulokinase.